A 316-amino-acid polypeptide reads, in one-letter code: Epoxide hydrolase 2 (316 aa).

In terms of domain architecture, AB hydrolase-1 spans 25 to 302 (PAVLFLHGFP…AAHFINQERP (278 aa)). Residue Asp101 is the Nucleophile of the active site. Tyr150 is a binding site for an epoxide. Tyr230 (proton donor) is an active-site residue. His295 functions as the Proton acceptor in the catalytic mechanism.

It belongs to the AB hydrolase superfamily. Epoxide hydrolase family. Homodimer. Highly expressed in young fruits 15 days after anthesis (15-DAA). Also observed in stems and leaves.

The enzyme catalyses an epoxide + H2O = an ethanediol. It carries out the reaction (24S)-24,25-epoxycucurbitadienol + H2O = (24R)-24,25-dihydroxycucurbitadienol. The protein operates within secondary metabolite biosynthesis; terpenoid biosynthesis. Functionally, epoxide hydrolase involved in the biosynthesis of cucurbitacin and mogroside tetracyclic triterpene natural products (e.g. siamenoside I and mogrosides IV, V and VI). Cucurbitacins have cytotoxic properties and exhibit deterrent taste as a defense barrier against herbivores. Mogrosides are nonsugar highly oxygenated compounds used as high-intensity zero-calorie sweeteners; they also possess pharmacological properties such as regulating immunity, lowering blood sugar and lipid levels, protecting the liver, and acting as antioxidants and antitumor agents. Catalyzes the hydrolysis of aromatic epoxide-containing substrates, such as the conversion of 24,25-epoxycucurbitadienol to 24,25-dihydroxycucurbitadienol. In Siraitia grosvenorii (Monk's fruit), this protein is Epoxide hydrolase 2.